A 621-amino-acid polypeptide reads, in one-letter code: Beta-conglycinin alpha' subunit (621 aa).

The first 24 residues, 1-24 (MMRARFPLLLLGVVFLASVSVSFG), serve as a signal peptide directing secretion. Positions 25 to 62 (IAYWEKQNPSHNKCLRSCNSEKDSYRNQACHARCNLLK) are excised as a propeptide. The interval 64-214 (EEEEECEEGQ…RHKNKNPFHF (151 aa)) is disordered. Composition is skewed to basic and acidic residues over residues 80-92 (QHPE…HGEK) and 111-173 (PHQE…QGKE). The segment covering 174-196 (SEEEEEDQDEDEEQDKESQESEG) has biased composition (acidic residues). 2 Cupin type-1 domains span residues 212 to 370 (FHFN…EEIN) and 422 to 583 (FNLR…KDIE). Asparagine 277 and asparagine 533 each carry an N-linked (GlcNAc...) asparagine glycan. The tract at residues 612-621 (PLSSILRAFY) is necessary for sorting to protein storage vacuole.

The protein belongs to the 7S seed storage protein family. As to quaternary structure, the alpha-, alpha'-, and beta-subunits associate in various combinations to form trimeric proteins.

The protein resides in the vacuole. Its subcellular location is the aleurone grain. It is found in the endoplasmic reticulum. It localises to the protein storage vacuole. In terms of biological role, seed storage protein. Accumulates during seed development and is hydrolyzed after germination to provide a carbon and nitrogen source for the developing seedling. The chain is Beta-conglycinin alpha' subunit from Glycine max (Soybean).